Consider the following 71-residue polypeptide: Antitoxin VapB22 (71 aa).

It belongs to the phD/YefM antitoxin family.

In terms of biological role, antitoxin component of a type II toxin-antitoxin (TA) system. Upon expression in M.smegmatis neutralizes the effect of cognate toxin VapC22. The polypeptide is Antitoxin VapB22 (vapB22) (Mycobacterium tuberculosis (strain ATCC 25618 / H37Rv)).